Here is a 749-residue protein sequence, read N- to C-terminus: Catalase-peroxidase (749 aa).

A cross-link (tryptophyl-tyrosyl-methioninium (Trp-Tyr) (with M-260)) is located at residues 98–234; that stretch reads WHAAGTYRVQ…LAASHMGLIY (137 aa). Histidine 99 (proton acceptor) is an active-site residue. Positions 234 to 260 form a cross-link, tryptophyl-tyrosyl-methioninium (Tyr-Met) (with W-98); sequence YVNPEGPNGEPDPVAAAHDIRTTFGRM. Histidine 275 is a binding site for heme b.

The protein belongs to the peroxidase family. Peroxidase/catalase subfamily. As to quaternary structure, homodimer or homotetramer. It depends on heme b as a cofactor. Post-translationally, formation of the three residue Trp-Tyr-Met cross-link is important for the catalase, but not the peroxidase activity of the enzyme.

Its subcellular location is the cytoplasm. It carries out the reaction H2O2 + AH2 = A + 2 H2O. The enzyme catalyses 2 H2O2 = O2 + 2 H2O. Functionally, bifunctional enzyme with both catalase and broad-spectrum peroxidase activity. The polypeptide is Catalase-peroxidase (Mycosarcoma maydis (Corn smut fungus)).